We begin with the raw amino-acid sequence, 155 residues long: Small ribosomal subunit protein uS7 (155 aa).

This sequence belongs to the universal ribosomal protein uS7 family. As to quaternary structure, part of the 30S ribosomal subunit. Contacts proteins S9 and S11.

One of the primary rRNA binding proteins, it binds directly to 16S rRNA where it nucleates assembly of the head domain of the 30S subunit. Is located at the subunit interface close to the decoding center, probably blocks exit of the E-site tRNA. This Helicobacter hepaticus (strain ATCC 51449 / 3B1) protein is Small ribosomal subunit protein uS7.